The primary structure comprises 82 residues: Sulfur carrier protein TusA (82 aa).

The active-site Cysteine persulfide intermediate is C17.

This sequence belongs to the sulfur carrier protein TusA family.

It localises to the cytoplasm. In terms of biological role, sulfur carrier protein which probably makes part of a sulfur-relay system. This Glaesserella parasuis serovar 5 (strain SH0165) (Haemophilus parasuis) protein is Sulfur carrier protein TusA.